A 553-amino-acid chain; its full sequence is NAD(P)H-quinone oxidoreductase chain 4 2 (553 aa).

14 helical membrane passes run 6–26 (FPWL…IPVI), 34–54 (VRWF…YVFL), 87–107 (ISAP…LAAW), 115–135 (LFYF…VAQD), 136–156 (LLLF…LVSI), 169–189 (FLLY…AMAL), 210–230 (ALEL…LAIF), 244–264 (SAPV…YGLI), 276–296 (IYFA…GAFA), 312–332 (VSHM…GISG), 333–353 (AMLQ…LAGV), 376–396 (VFAL…MSGF), 418–438 (VVTV…LLSM), and 487–507 (IFIA…PQLA).

It belongs to the complex I subunit 4 family.

It is found in the cellular thylakoid membrane. It catalyses the reaction a plastoquinone + NADH + (n+1) H(+)(in) = a plastoquinol + NAD(+) + n H(+)(out). The enzyme catalyses a plastoquinone + NADPH + (n+1) H(+)(in) = a plastoquinol + NADP(+) + n H(+)(out). Functionally, NDH-1 shuttles electrons from NAD(P)H, via FMN and iron-sulfur (Fe-S) centers, to quinones in the respiratory chain. The immediate electron acceptor for the enzyme in this species is believed to be plastoquinone. Couples the redox reaction to proton translocation (for every two electrons transferred, four hydrogen ions are translocated across the cytoplasmic membrane), and thus conserves the redox energy in a proton gradient. The protein is NAD(P)H-quinone oxidoreductase chain 4 2 of Microcystis aeruginosa (strain NIES-843 / IAM M-2473).